The chain runs to 412 residues: Divalent metal cation transporter MntH (412 aa).

Helical transmembrane passes span 19 to 39 (FALMGPAFIAAIGYIDPGNFA), 46 to 66 (ASFGYKLLWVVVWANLMAMLI), 94 to 114 (VWFYWVQAEIIAMATDLAEFI), 122 to 142 (LILGVSLLQGAVLTGIATFLI), 155 to 175 (LVIGGLLLFVAAAYIVELVFS), 196 to 216 (AVFLAAGVLGATIMPHVIYLH), 241 to 261 (IAMTIAGFVNLAMMATAAAAF), 290 to 310 (IFGLSLVAAGLSSTVVGTLAG), 329 to 349 (SVTMMPSFIVILMGLDPTRIL), 350 to 370 (VMSQVLLSFGIALALVPLLIF), and 389 to 409 (IGWMIVVLVVALNLWLLIGTL).

This sequence belongs to the NRAMP family.

The protein resides in the cell inner membrane. Its function is as follows. H(+)-stimulated, divalent metal cation uptake system. This is Divalent metal cation transporter MntH from Enterobacter sp. (strain 638).